The following is a 536-amino-acid chain: Apolipoprotein N-acyltransferase (536 aa).

7 helical membrane-spanning segments follow: residues I10–G30, A42–A62, W76–V96, A107–A127, L136–G158, I181–I201, and A212–L232. In terms of domain architecture, CN hydrolase spans M248 to A501. E295 acts as the Proton acceptor in catalysis. K360 is an active-site residue. C413 acts as the Nucleophile in catalysis. A helical transmembrane segment spans residues A509–L529.

Belongs to the CN hydrolase family. Apolipoprotein N-acyltransferase subfamily.

The protein resides in the cell inner membrane. The catalysed reaction is N-terminal S-1,2-diacyl-sn-glyceryl-L-cysteinyl-[lipoprotein] + a glycerophospholipid = N-acyl-S-1,2-diacyl-sn-glyceryl-L-cysteinyl-[lipoprotein] + a 2-acyl-sn-glycero-3-phospholipid + H(+). It functions in the pathway protein modification; lipoprotein biosynthesis (N-acyl transfer). Functionally, catalyzes the phospholipid dependent N-acylation of the N-terminal cysteine of apolipoprotein, the last step in lipoprotein maturation. In Rhodopseudomonas palustris (strain ATCC BAA-98 / CGA009), this protein is Apolipoprotein N-acyltransferase.